A 354-amino-acid polypeptide reads, in one-letter code: Putative F-box/kelch-repeat protein At5g03000 (354 aa).

In terms of domain architecture, F-box spans 37 to 86; sequence PTVFSSLPDELILNCLARVSRFYRPSLSLVNKEFQSLIASPDLEATRSRI. 2 Kelch repeats span residues 143-189 and 190-236; these read EIYI…VIDG and KIYV…FPGK.

The sequence is that of Putative F-box/kelch-repeat protein At5g03000 from Arabidopsis thaliana (Mouse-ear cress).